We begin with the raw amino-acid sequence, 329 residues long: uncharacterized protein (329 aa).

The disordered stretch occupies residues 284–303; it reads SGGGHSEAGGLNAPYDKSKS.

This is an uncharacterized protein from Methanocaldococcus jannaschii (strain ATCC 43067 / DSM 2661 / JAL-1 / JCM 10045 / NBRC 100440) (Methanococcus jannaschii).